Here is a 381-residue protein sequence, read N- to C-terminus: MYG1 exonuclease (381 aa).

A mitochondrion-targeting transit peptide spans 1-47 (MGRGFLRGVLTLLPLRSVLQVQHCMLVSEPDLPPKRPRNNLMAPPRI). An N6-acetyllysine mark is found at lysine 267 and lysine 273.

This sequence belongs to the MYG1 family.

It localises to the nucleus. The protein localises to the nucleoplasm. It is found in the mitochondrion matrix. Its subcellular location is the nucleolus. Its function is as follows. 3'-5' RNA exonuclease which cleaves in situ on specific transcripts in both nucleus and mitochondrion. Involved in regulating spatially segregated organellar RNA processing, acts as a coordinator of nucleo-mitochondrial crosstalk. In nucleolus, processes pre-ribosomal RNA involved in ribosome assembly and alters cytoplasmic translation. In mitochondrial matrix, processes 3'-termini of the mito-ribosomal and messenger RNAs and controls translation of mitochondrial proteins. This is MYG1 exonuclease from Rattus norvegicus (Rat).